The primary structure comprises 567 residues: Pyruvate decarboxylase (567 aa).

2 residues coordinate pyruvate: aspartate 28 and histidine 117. Residues threonine 393 and 416–418 (GSI) each bind thiamine diphosphate. Position 447 (aspartate 447) interacts with Mg(2+). Thiamine diphosphate-binding positions include 448–449 (GS) and 475–480 (NDGYTI). Residues asparagine 475 and glycine 477 each contribute to the Mg(2+) site. Glutamate 481 is a pyruvate binding site.

Belongs to the TPP enzyme family. As to quaternary structure, homotetramer. Mg(2+) serves as cofactor. Thiamine diphosphate is required as a cofactor.

It is found in the cytoplasm. It catalyses the reaction a 2-oxocarboxylate + H(+) = an aldehyde + CO2. The catalysed reaction is pyruvate + H(+) = acetaldehyde + CO2. The sequence is that of Pyruvate decarboxylase (PDC11) from Candida albicans (strain SC5314 / ATCC MYA-2876) (Yeast).